Reading from the N-terminus, the 210-residue chain is Large ribosomal subunit protein uL4 (210 aa).

Over residues 41-51 the composition is skewed to polar residues; the sequence is ANARQGTQSTK. Disordered regions lie at residues 41–60 and 67–98; these read ANAR…QGSS and KGTG…DFSK.

Belongs to the universal ribosomal protein uL4 family. In terms of assembly, part of the 50S ribosomal subunit.

In terms of biological role, one of the primary rRNA binding proteins, this protein initially binds near the 5'-end of the 23S rRNA. It is important during the early stages of 50S assembly. It makes multiple contacts with different domains of the 23S rRNA in the assembled 50S subunit and ribosome. Its function is as follows. Forms part of the polypeptide exit tunnel. This chain is Large ribosomal subunit protein uL4, found in Dehalococcoides mccartyi (strain ATCC BAA-2100 / JCM 16839 / KCTC 5957 / BAV1).